A 109-amino-acid chain; its full sequence is Nucleoid-associated protein plu3840 (109 aa).

Disordered regions lie at residues 1–23 and 89–109; these read MFGKGGLGNLMKQAQQMQDKMQK and KEKMAGISSGMQLPPGFKMPF.

Belongs to the YbaB/EbfC family. Homodimer.

It is found in the cytoplasm. The protein localises to the nucleoid. Binds to DNA and alters its conformation. May be involved in regulation of gene expression, nucleoid organization and DNA protection. This is Nucleoid-associated protein plu3840 from Photorhabdus laumondii subsp. laumondii (strain DSM 15139 / CIP 105565 / TT01) (Photorhabdus luminescens subsp. laumondii).